Here is a 300-residue protein sequence, read N- to C-terminus: MNTLVLKIDTILSKHLKKQLAPYTISSQNTYVAFAAKKNGVTVLLYKSGKLVLQGNGANALAQELNLPVAKTVFEASNNSQDIPIIGSDEVGNGSYFGGIAVVASFVDPKDHSFLKKLGVDDSKKLSDKTIQQIAPLLEKQIPHQSLLLSPKKYNELVGKSKPYNAISIKVALHNQAIFLLLQKGIQPKQIVIDAFTSQSNYEKHLKKEKNHFPNPLTFQEKAESHYLAVAVSSIIARNLFLDNLDQLGQDLGYQLPSGAGSASDKVASQLLAAYGMSSLEYSAKLHFANTHKAQALLTK.

An RNase H type-2 domain is found at 83–300 (IPIIGSDEVG…THKAQALLTK (218 aa)). Positions 89, 90, and 194 each coordinate a divalent metal cation.

Belongs to the RNase HII family. RnhC subfamily. Mn(2+) is required as a cofactor. It depends on Mg(2+) as a cofactor.

Its subcellular location is the cytoplasm. It catalyses the reaction Endonucleolytic cleavage to 5'-phosphomonoester.. Functionally, endonuclease that specifically degrades the RNA of RNA-DNA hybrids. This Streptococcus pyogenes serotype M5 (strain Manfredo) protein is Ribonuclease HIII.